Reading from the N-terminus, the 413-residue chain is YYTPEYKTKDTDILAAFRMTPQPGVPAEEAGAAVAAESSTGTWTTVWTDGLTSLDRYKGRCYDIEPVAGEENQYIAYVAYPLDLFEEGSVTNMLTSIVGNVFGFKALRALRLEDLRIPPAYSKTFMGPPHGIQVERDKLNKYGRPLLGCTIKPKLGLSAKNYGRAVYECLRGGLDFTKDDENVNSQPFMRWRDRFLFVAEALFKSQAETGEIKGHYLNATAGTCEEMMKRAVFARELGAPIVMHDYLTGGFTANTSLAFYCRDNGLLLHIHRAMHAVIDRQRNHGIHFRVLAKALRMSGGDHIHAGTVVGKLEGEREVTLGFVDLLRDDYIEKDRSRGIYFTQDWVSMPGVFPVASGGIHVWHMPALTEIFGDDSVLQFGGGTLGHPWGNAPGAVANRVALEACVQARNEGRD.

Positions 100 and 150 each coordinate substrate. Residue lysine 152 is the Proton acceptor of the active site. Substrate is bound at residue lysine 154. Mg(2+) contacts are provided by lysine 178, aspartate 180, and glutamate 181. N6-carboxylysine is present on lysine 178. The Proton acceptor role is filled by histidine 271. Residues arginine 272, histidine 304, and serine 356 each contribute to the substrate site.

Belongs to the RuBisCO large chain family. Type I subfamily. As to quaternary structure, heterohexadecamer of 8 large chains and 8 small chains; disulfide-linked. The disulfide link is formed within the large subunit homodimers. Mg(2+) is required as a cofactor. The disulfide bond which can form in the large chain dimeric partners within the hexadecamer appears to be associated with oxidative stress and protein turnover.

The protein resides in the plastid. Its subcellular location is the chloroplast. It catalyses the reaction 2 (2R)-3-phosphoglycerate + 2 H(+) = D-ribulose 1,5-bisphosphate + CO2 + H2O. The catalysed reaction is D-ribulose 1,5-bisphosphate + O2 = 2-phosphoglycolate + (2R)-3-phosphoglycerate + 2 H(+). Its function is as follows. RuBisCO catalyzes two reactions: the carboxylation of D-ribulose 1,5-bisphosphate, the primary event in carbon dioxide fixation, as well as the oxidative fragmentation of the pentose substrate in the photorespiration process. Both reactions occur simultaneously and in competition at the same active site. This is Ribulose bisphosphate carboxylase large chain (rbcL) from Adiantum pedatum (Northern maidenhair fern).